We begin with the raw amino-acid sequence, 677 residues long: Pannexin-2 (677 aa).

The Cytoplasmic segment spans residues 11–53 (MATALLAGEKLRELILPGSQDDKAGALAALLLQLKLELPFDRV). A helical transmembrane segment spans residues 54-74 (VTIGTVLVPILLVTLVFTKNF). Residues 75–125 (AEEPIYCYTPHNFTRDQALYARGYCWTELRDALPGVDASLWPSLFEHKFLP) are Extracellular-facing. N-linked (GlcNAc...) asparagine glycosylation occurs at N86. Residues 126 to 146 (YALLAFAAIMYVPALGWEFLA) form a helical membrane-spanning segment. Residues 147–230 (STRLTSELNF…NFLAKLYLAR (84 aa)) are Cytoplasmic-facing. The helical transmembrane segment at 231–251 (HVLILLLSVVPISYLCTYYAT) threads the bilayer. The Extracellular segment spans residues 252 to 295 (QKQNEFTCALGASPDGPVGSAGPTVRVSCKLPSVQLQRIIAGVD). The helical transmembrane segment at 296 to 316 (IVLLCFMNLIILVNLIHLFIF) threads the bilayer. The Cytoplasmic segment spans residues 317–617 (RKSNFIFDKL…LGKADPLTIL (301 aa)). Polar residues predominate over residues 394–408 (TTPTVRDSGIQTVDP). 2 disordered regions span residues 394-425 (TTPTVRDSGIQTVDPSINPAEPDGSAEPPVVK) and 485-512 (AHHYKGSGGDSGPSSAPPAASEKKHTRH). Phosphoserine is present on residues S593 and S604.

The protein belongs to the pannexin family. Homoheptameric. S-palmitoylated in neural stem and progenitor cells. Post-translationally, cleaved by CASP3 and CASP7 during apoptosis. Cleavage has no effect on it function. In terms of tissue distribution, expression is enriched in central nervous system. Expressed in suprabasal layers of skin epidermis. More aboundantly expressed in skin.

It localises to the cell membrane. The protein resides in the golgi apparatus membrane. The protein localises to the endoplasmic reticulum membrane. The enzyme catalyses ATP(in) = ATP(out). It carries out the reaction chloride(in) = chloride(out). The catalysed reaction is iodide(out) = iodide(in). It catalyses the reaction Na(+)(in) = Na(+)(out). The enzyme catalyses D-gluconate(in) = D-gluconate(out). Functionally, ion channel with a slight anion preference. Also able to release ATP. Plays a role in regulating neurogenesis and apoptosis in keratinocytes. This is Pannexin-2 (Panx2) from Mus musculus (Mouse).